Here is a 152-residue protein sequence, read N- to C-terminus: Transcriptional regulator MraZ (152 aa).

SpoVT-AbrB domains follow at residues 5 to 52 (ATLV…PLPE) and 81 to 124 (ASEC…DETT).

Belongs to the MraZ family. In terms of assembly, forms oligomers.

The protein localises to the cytoplasm. The protein resides in the nucleoid. Its function is as follows. Negatively regulates its own expression and that of the subsequent genes in the proximal part of the division and cell wall (dcw) gene cluster. Acts by binding directly to DNA. May also regulate the expression of genes outside the dcw cluster. This Klebsiella pneumoniae subsp. pneumoniae (strain ATCC 700721 / MGH 78578) protein is Transcriptional regulator MraZ.